The following is a 910-amino-acid chain: Inactive disease susceptibility protein LOV1 (910 aa).

Residues 22 to 60 adopt a coiled-coil conformation; that stretch reads ARLNGIGEQVDGLKRQLGRLQSLLKDADAKKHESERVRN. Residues 169 to 461 enclose the NB-ARC domain; sequence EQSVEALAGH…AAEGIITSSD (293 aa). 3 LRR repeats span residues 584–609, 610–632, and 634–655; these read LPLL…IGDL, IHLR…LRNL, and LLLY…LKEM.

It belongs to the disease resistance NB-LRR family. RPP8/HRT subfamily.

The sequence is that of Inactive disease susceptibility protein LOV1 (LOV1) from Arabidopsis thaliana (Mouse-ear cress).